Reading from the N-terminus, the 307-residue chain is 4-hydroxy-3-methylbut-2-enyl diphosphate reductase (307 aa).

Residue Cys13 participates in [4Fe-4S] cluster binding. (2E)-4-hydroxy-3-methylbut-2-enyl diphosphate-binding residues include His42 and His75. Dimethylallyl diphosphate-binding residues include His42 and His75. Residues His42 and His75 each contribute to the isopentenyl diphosphate site. Cys97 provides a ligand contact to [4Fe-4S] cluster. (2E)-4-hydroxy-3-methylbut-2-enyl diphosphate is bound at residue His125. Dimethylallyl diphosphate is bound at residue His125. His125 contacts isopentenyl diphosphate. Glu127 functions as the Proton donor in the catalytic mechanism. Residue Thr165 coordinates (2E)-4-hydroxy-3-methylbut-2-enyl diphosphate. Residue Cys195 coordinates [4Fe-4S] cluster. (2E)-4-hydroxy-3-methylbut-2-enyl diphosphate contacts are provided by Ser223, Ser224, Asn225, and Ser267. Dimethylallyl diphosphate contacts are provided by Ser223, Ser224, Asn225, and Ser267. Residues Ser223, Ser224, Asn225, and Ser267 each contribute to the isopentenyl diphosphate site.

This sequence belongs to the IspH family. The cofactor is [4Fe-4S] cluster.

The catalysed reaction is isopentenyl diphosphate + 2 oxidized [2Fe-2S]-[ferredoxin] + H2O = (2E)-4-hydroxy-3-methylbut-2-enyl diphosphate + 2 reduced [2Fe-2S]-[ferredoxin] + 2 H(+). The enzyme catalyses dimethylallyl diphosphate + 2 oxidized [2Fe-2S]-[ferredoxin] + H2O = (2E)-4-hydroxy-3-methylbut-2-enyl diphosphate + 2 reduced [2Fe-2S]-[ferredoxin] + 2 H(+). The protein operates within isoprenoid biosynthesis; dimethylallyl diphosphate biosynthesis; dimethylallyl diphosphate from (2E)-4-hydroxy-3-methylbutenyl diphosphate: step 1/1. It participates in isoprenoid biosynthesis; isopentenyl diphosphate biosynthesis via DXP pathway; isopentenyl diphosphate from 1-deoxy-D-xylulose 5-phosphate: step 6/6. Catalyzes the conversion of 1-hydroxy-2-methyl-2-(E)-butenyl 4-diphosphate (HMBPP) into a mixture of isopentenyl diphosphate (IPP) and dimethylallyl diphosphate (DMAPP). Acts in the terminal step of the DOXP/MEP pathway for isoprenoid precursor biosynthesis. The polypeptide is 4-hydroxy-3-methylbut-2-enyl diphosphate reductase (Chlamydia trachomatis serovar D (strain ATCC VR-885 / DSM 19411 / UW-3/Cx)).